The chain runs to 1131 residues: PolyA-specific ribonuclease subunit panl-2 (1131 aa).

The region spanning 489–864 (VTMQSTHGMN…LPALLAYKKK (376 aa)) is the USP domain. An Exonuclease domain is found at 909–1074 (VGLDAEFIKI…VDARYALKLY (166 aa)). The segment covering 1104 to 1115 (QTSSPLVVSTTR) has biased composition (polar residues). The segment at 1104 to 1131 (QTSSPLVVSTTRKTPEDTNPADAAPKSV) is disordered.

This Caenorhabditis elegans protein is PolyA-specific ribonuclease subunit panl-2.